A 250-amino-acid polypeptide reads, in one-letter code: Isoprenyl transferase (250 aa).

Asp27 is an active-site residue. Asp27 lines the Mg(2+) pocket. Residues 28-31, Trp32, His48, and 76-78 contribute to the substrate site; these read GNRR and STE. Catalysis depends on Asn79, which acts as the Proton acceptor. Residues Phe80, Arg82, Arg199, and 205 to 207 each bind substrate; that span reads RVS. Mg(2+) is bound at residue Glu218.

The protein belongs to the UPP synthase family. In terms of assembly, homodimer. Mg(2+) serves as cofactor.

In terms of biological role, catalyzes the condensation of isopentenyl diphosphate (IPP) with allylic pyrophosphates generating different type of terpenoids. This is Isoprenyl transferase from Chlamydia pneumoniae (Chlamydophila pneumoniae).